The sequence spans 245 residues: Dehydrogenase/reductase SDR family member 6 (245 aa).

Residues 16 to 18 (QGI), Asp-37, and Asp-58 each bind NAD(+). Arg-144 contacts substrate. Tyr-147 (proton acceptor) is an active-site residue. NAD(+) contacts are provided by residues Lys-151 and 180 to 184 (VDTPS). Residues Arg-188 and Arg-205 each coordinate substrate.

This sequence belongs to the short-chain dehydrogenases/reductases (SDR) family. As to quaternary structure, homotetramer. In terms of tissue distribution, detected in liver (at protein level).

It is found in the cytoplasm. The catalysed reaction is cis-4-hydroxy-L-proline + NAD(+) = 4-oxo-L-proline + NADH + H(+). It catalyses the reaction (R)-3-hydroxybutanoate + NAD(+) = acetoacetate + NADH + H(+). It functions in the pathway amino-acid metabolism. Its pathway is siderophore biosynthesis. NAD(H)-dependent dehydrogenase/reductase with a preference for cyclic substrates. Catalyzes stereoselective conversion of 4-oxo-L-proline to cis-4-hydroxy-L-proline, likely a detoxification mechanism for ketoprolines. Mediates the formation of 2,5-dihydroxybenzoate (2,5-DHBA), a siderophore that chelates free cytoplasmic iron and associates with LCN2, thereby regulating iron transport and homeostasis while protecting cells against free radical-induced oxidative stress. The iron-siderophore complex is imported into mitochondria, providing an iron source for mitochondrial metabolic processes in particular heme synthesis. May act as a 3-hydroxybutyrate dehydrogenase. This chain is Dehydrogenase/reductase SDR family member 6, found in Homo sapiens (Human).